Here is a 141-residue protein sequence, read N- to C-terminus: Hemoglobin subunit alpha (141 aa).

The 141-residue stretch at 1 to 141 (VLSPADKTNI…VSTVLVSKYR (141 aa)) folds into the Globin domain. Ser3 is modified (phosphoserine). Lys7 bears the N6-succinyllysine mark. Thr8 is modified (phosphothreonine). The residue at position 11 (Lys11) is an N6-succinyllysine. Residue Lys16 is modified to N6-acetyllysine; alternate. Residue Lys16 is modified to N6-succinyllysine; alternate. Tyr24 is modified (phosphotyrosine). Phosphoserine is present on Ser35. Lys40 is modified (N6-succinyllysine). A Phosphoserine modification is found at Ser49. Residue His58 participates in O2 binding. His87 contributes to the heme b binding site. Position 102 is a phosphoserine (Ser102). A Phosphothreonine modification is found at Thr108. Residues Ser124 and Ser131 each carry the phosphoserine modification. A Phosphothreonine modification is found at Thr134. A Phosphoserine modification is found at Ser138.

The protein belongs to the globin family. In terms of assembly, heterotetramer of two alpha chains and two beta chains. In terms of tissue distribution, red blood cells.

Functionally, involved in oxygen transport from the lung to the various peripheral tissues. Hemopressin acts as an antagonist peptide of the cannabinoid receptor CNR1. Hemopressin-binding efficiently blocks cannabinoid receptor CNR1 and subsequent signaling. The polypeptide is Hemoglobin subunit alpha (HBA) (Myotis velifer (Mouse-eared bat)).